A 227-amino-acid polypeptide reads, in one-letter code: Lipoprotein-releasing system ATP-binding protein LolD (227 aa).

The 221-residue stretch at 7 to 227 (LKLTGVERHY…TISDGKVVEF (221 aa)) folds into the ABC transporter domain. Residue 43 to 50 (APSGTGKS) participates in ATP binding.

Belongs to the ABC transporter superfamily. Lipoprotein translocase (TC 3.A.1.125) family. The complex is composed of two ATP-binding proteins (LolD) and two transmembrane proteins (LolC and LolE).

It localises to the cell inner membrane. Part of the ABC transporter complex LolCDE involved in the translocation of mature outer membrane-directed lipoproteins, from the inner membrane to the periplasmic chaperone, LolA. Responsible for the formation of the LolA-lipoprotein complex in an ATP-dependent manner. This Rhizobium etli (strain ATCC 51251 / DSM 11541 / JCM 21823 / NBRC 15573 / CFN 42) protein is Lipoprotein-releasing system ATP-binding protein LolD.